Reading from the N-terminus, the 98-residue chain is NADH-ubiquinone oxidoreductase chain 4L (98 aa).

Transmembrane regions (helical) follow at residues 2–22, 29–49, and 61–81; these read PSIS…MLMF, SLLC…LIIL, and ILLL…LVTV.

This sequence belongs to the complex I subunit 4L family. In terms of assembly, core subunit of respiratory chain NADH dehydrogenase (Complex I) which is composed of 45 different subunits.

The protein resides in the mitochondrion inner membrane. The enzyme catalyses a ubiquinone + NADH + 5 H(+)(in) = a ubiquinol + NAD(+) + 4 H(+)(out). Core subunit of the mitochondrial membrane respiratory chain NADH dehydrogenase (Complex I) which catalyzes electron transfer from NADH through the respiratory chain, using ubiquinone as an electron acceptor. Part of the enzyme membrane arm which is embedded in the lipid bilayer and involved in proton translocation. This chain is NADH-ubiquinone oxidoreductase chain 4L (MT-ND4L), found in Microcebus mamiratra (Claire's mouse lemur).